A 216-amino-acid chain; its full sequence is Thioredoxin-like 2, chloroplastic (216 aa).

The N-terminal 58 residues, M1–K58, are a transit peptide targeting the chloroplast. Positions P19–N40 are enriched in low complexity. Residues P19–P70 form a disordered region. Residues P41–P51 show a composition bias toward pro residues. The Thioredoxin domain occupies A61 to T188. Active-site nucleophile residues include C111 and C114. A disulfide bridge connects residues C111 and C114.

The protein belongs to the thioredoxin family.

It is found in the plastid. The protein resides in the chloroplast. Probable thiol-disulfide oxidoreductase that may participate in various redox reactions. This is Thioredoxin-like 2, chloroplastic from Oryza sativa subsp. japonica (Rice).